Reading from the N-terminus, the 419-residue chain is Metacaspase-1B (419 aa).

The tract at residues M1–K109 is disordered. Positions S33–Q50 are enriched in pro residues. A compositionally biased stretch (low complexity) spans S51–Y66. A compositionally biased stretch (polar residues) spans Q82 to W93. Active-site residues include H210 and C266.

It belongs to the peptidase C14B family.

In terms of biological role, involved in cell death (apoptosis). This is Metacaspase-1B (casB) from Aspergillus oryzae (strain ATCC 42149 / RIB 40) (Yellow koji mold).